Here is a 65-residue protein sequence, read N- to C-terminus: Conotoxin Lp5.1 (65 aa).

Positions 1 to 22 are cleaved as a signal peptide; sequence MRCVPVFIILLLLIPSAPSVDA. A propeptide spanning residues 23–50 is cleaved from the precursor; it reads QRKTKDDVPLASFHDNAKRTLKRLWNKR.

Belongs to the conotoxin T superfamily. Post-translationally, contains 2 disulfide bonds that can be either 'C1-C3, C2-C4' or 'C1-C4, C2-C3', since these disulfide connectivities have been observed for conotoxins with cysteine framework V (for examples, see AC P0DQQ7 and AC P81755). In terms of tissue distribution, expressed by the venom duct.

The protein resides in the secreted. The polypeptide is Conotoxin Lp5.1 (Conus leopardus (Leopard cone)).